The primary structure comprises 386 residues: 2-isopropylmalate synthase (386 aa).

In terms of domain architecture, Pyruvate carboxyltransferase spans 15-269 (IRIFDTTLRD…ETNVKTWKLY (255 aa)). Residues aspartate 24, histidine 207, histidine 209, and asparagine 243 each contribute to the a divalent metal cation site.

Belongs to the alpha-IPM synthase/homocitrate synthase family. Homodimer. It depends on a divalent metal cation as a cofactor.

It catalyses the reaction 3-methyl-2-oxobutanoate + acetyl-CoA + H2O = (2S)-2-isopropylmalate + CoA + H(+). It functions in the pathway amino-acid biosynthesis; L-leucine biosynthesis; L-leucine from 3-methyl-2-oxobutanoate: step 1/4. Its function is as follows. Catalyzes the condensation of the acetyl group of acetyl-CoA with 3-methyl-2-oxobutanoate (2-oxoisovalerate) to form 3-carboxy-3-hydroxy-4-methylpentanoate (2-isopropylmalate). Carries out the first step of the leucine biosynthesis pathway. The protein is 2-isopropylmalate synthase (leuA) of Saccharolobus solfataricus (strain ATCC 35092 / DSM 1617 / JCM 11322 / P2) (Sulfolobus solfataricus).